The following is a 137-amino-acid chain: Large ribosomal subunit protein uL16 (137 aa).

The protein belongs to the universal ribosomal protein uL16 family. In terms of assembly, part of the 50S ribosomal subunit.

In terms of biological role, binds 23S rRNA and is also seen to make contacts with the A and possibly P site tRNAs. This is Large ribosomal subunit protein uL16 from Wolbachia pipientis subsp. Culex pipiens (strain wPip).